The primary structure comprises 375 residues: Probable L-tyrosine/L-aspartate decarboxylase (375 aa).

Lysine 226 bears the N6-(pyridoxal phosphate)lysine mark.

Belongs to the group II decarboxylase family. MfnA subfamily. Pyridoxal 5'-phosphate is required as a cofactor.

It catalyses the reaction L-tyrosine + H(+) = tyramine + CO2. The enzyme catalyses L-aspartate + H(+) = beta-alanine + CO2. The protein operates within cofactor biosynthesis; methanofuran biosynthesis. It participates in cofactor biosynthesis; coenzyme A biosynthesis. Its function is as follows. Catalyzes the decarboxylation of L-tyrosine to produce tyramine for methanofuran biosynthesis. Can also catalyze the decarboxylation of L-aspartate to produce beta-alanine for coenzyme A (CoA) biosynthesis. This Methanocella arvoryzae (strain DSM 22066 / NBRC 105507 / MRE50) protein is Probable L-tyrosine/L-aspartate decarboxylase.